The primary structure comprises 1377 residues: DNA-directed RNA polymerase subunit beta' (1377 aa).

Residues Cys-60, Cys-62, Cys-75, and Cys-78 each contribute to the Zn(2+) site. Positions 449, 451, and 453 each coordinate Mg(2+). Zn(2+)-binding residues include Cys-777, Cys-851, Cys-858, and Cys-861.

Belongs to the RNA polymerase beta' chain family. In terms of assembly, the RNAP catalytic core consists of 2 alpha, 1 beta, 1 beta' and 1 omega subunit. When a sigma factor is associated with the core the holoenzyme is formed, which can initiate transcription. Requires Mg(2+) as cofactor. The cofactor is Zn(2+).

The catalysed reaction is RNA(n) + a ribonucleoside 5'-triphosphate = RNA(n+1) + diphosphate. Its function is as follows. DNA-dependent RNA polymerase catalyzes the transcription of DNA into RNA using the four ribonucleoside triphosphates as substrates. The sequence is that of DNA-directed RNA polymerase subunit beta' from Borreliella burgdorferi (strain ATCC 35210 / DSM 4680 / CIP 102532 / B31) (Borrelia burgdorferi).